The primary structure comprises 435 residues: Envelope glycoprotein M (435 aa).

Residues 1 to 36 (MGTQKKGPRSEKVSPYDTTTPEVEALDHQMDTLNWR) lie on the Intravirion side of the membrane. A helical transmembrane segment spans residues 37 to 57 (IWIIQVMMFTLGAVMLLATLI). The Virion surface segment spans residues 58–111 (AASSEYTGIPCFYAAVVDYELFNATLDGGVWSGNRGGYSAPVLFLEPHSVVAFT). The chain crosses the membrane as a helical span at residues 112–132 (YYTALTAMAMAVYTLITAAII). The Intravirion segment spans residues 133–155 (HRETKNQRVRQSSGVAWLVVDPT). Residues 156-176 (TLFWGLLSLWLLNAVVLLLAY) form a helical membrane-spanning segment. Over 177–178 (KQ) the chain is Virion surface. The helical transmembrane segment at 179-199 (IGVAATLYLGHFATSVIFTTY) threads the bilayer. Residues 200–233 (FCGRGKLDETNIKAVANLRQQSVFLYRLAGPTRA) are Intravirion-facing. Residues 234–254 (VFVNLMAALMAICILFVSLML) traverse the membrane as a helical segment. Over 255–265 (ELVVANHLHTG) the chain is Virion surface. A helical membrane pass occupies residues 266 to 288 (LWSSVSVAMSTFSTLSVVYLIVS). Over 289–294 (ELILAH) the chain is Intravirion. The helical transmembrane segment at 295–317 (YIHVLIGPSLGTLVACATLGTAA) threads the bilayer. The Virion surface segment spans residues 318-334 (HSYMDRLYDPISVQSPR). A helical membrane pass occupies residues 335-355 (LIPTTRGTLACLAVFSVVMLL). Residues 356–435 (LRLMRAYVYH…LYERSNSGWE (80 aa)) lie on the Intravirion side of the membrane.

The protein belongs to the herpesviridae glycoprotein M family. In terms of assembly, interacts (via N-terminus) with gN (via N-terminus). The gM-gN heterodimer forms the gCII complex.

It is found in the virion membrane. Its subcellular location is the host Golgi apparatus. It localises to the host trans-Golgi network. The protein resides in the host endosome membrane. The protein localises to the host nucleus inner membrane. Envelope glycoprotein important for virion assembly and egress. Plays a role in the correct incorporation of gH-gL into virion membrane. Directs the glycoprotein N (gN) to the host trans-Golgi network. This chain is Envelope glycoprotein M, found in Homo sapiens (Human).